Here is a 401-residue protein sequence, read N- to C-terminus: Imidazolonepropionase (401 aa).

Histidine 66 and histidine 68 together coordinate Fe(3+). Residues histidine 66 and histidine 68 each coordinate Zn(2+). The 4-imidazolone-5-propanoate site is built by arginine 75, tyrosine 138, and histidine 171. Position 138 (tyrosine 138) interacts with N-formimidoyl-L-glutamate. Residue histidine 236 coordinates Fe(3+). Histidine 236 provides a ligand contact to Zn(2+). Glutamine 239 contributes to the 4-imidazolone-5-propanoate binding site. Aspartate 311 provides a ligand contact to Fe(3+). Zn(2+) is bound at residue aspartate 311. The N-formimidoyl-L-glutamate site is built by asparagine 313 and glycine 315. A 4-imidazolone-5-propanoate-binding site is contributed by threonine 316.

It belongs to the metallo-dependent hydrolases superfamily. HutI family. Zn(2+) is required as a cofactor. Fe(3+) serves as cofactor.

It is found in the cytoplasm. The enzyme catalyses 4-imidazolone-5-propanoate + H2O = N-formimidoyl-L-glutamate. It participates in amino-acid degradation; L-histidine degradation into L-glutamate; N-formimidoyl-L-glutamate from L-histidine: step 3/3. Catalyzes the hydrolytic cleavage of the carbon-nitrogen bond in imidazolone-5-propanoate to yield N-formimidoyl-L-glutamate. It is the third step in the universal histidine degradation pathway. This chain is Imidazolonepropionase, found in Pseudomonas syringae pv. tomato (strain ATCC BAA-871 / DC3000).